The chain runs to 419 residues: DNA primase DnaG (419 aa).

Positions 174-260 constitute a Toprim domain; that stretch reads DAIIVVEGRS…EVEDLEKDEV (87 aa). Residues Glu-180, Asp-222, and Asp-224 each coordinate Mg(2+). The tract at residues 277–314 is disordered; the sequence is HNILSESDSKNSHKKHNGKHNNKHSNNKHQQHETKVKE. A compositionally biased stretch (basic residues) spans 288–305; that stretch reads SHKKHNGKHNNKHSNNKH.

The protein belongs to the archaeal DnaG primase family. Forms a ternary complex with MCM helicase and DNA. Component of the archaeal exosome complex. The cofactor is Mg(2+).

The catalysed reaction is ssDNA + n NTP = ssDNA/pppN(pN)n-1 hybrid + (n-1) diphosphate.. RNA polymerase that catalyzes the synthesis of short RNA molecules used as primers for DNA polymerase during DNA replication. Also part of the exosome, which is a complex involved in RNA degradation. Acts as a poly(A)-binding protein that enhances the interaction between heteromeric, adenine-rich transcripts and the exosome. In Methanobrevibacter smithii (strain ATCC 35061 / DSM 861 / OCM 144 / PS), this protein is DNA primase DnaG.